Reading from the N-terminus, the 260-residue chain is Coiled-coil domain-containing protein 127 (260 aa).

Positions 49 to 135 (QKEVEKEREA…QVMQEKRQVQ (87 aa)) form a coiled coil.

The protein is Coiled-coil domain-containing protein 127 (CCDC127) of Homo sapiens (Human).